The primary structure comprises 278 residues: Ribosomal RNA small subunit methyltransferase A (278 aa).

6 residues coordinate S-adenosyl-L-methionine: Asn28, Leu30, Gly55, Glu77, Asp103, and Asn122.

This sequence belongs to the class I-like SAM-binding methyltransferase superfamily. rRNA adenine N(6)-methyltransferase family. RsmA subfamily.

It localises to the cytoplasm. It carries out the reaction adenosine(1518)/adenosine(1519) in 16S rRNA + 4 S-adenosyl-L-methionine = N(6)-dimethyladenosine(1518)/N(6)-dimethyladenosine(1519) in 16S rRNA + 4 S-adenosyl-L-homocysteine + 4 H(+). Functionally, specifically dimethylates two adjacent adenosines (A1518 and A1519) in the loop of a conserved hairpin near the 3'-end of 16S rRNA in the 30S particle. May play a critical role in biogenesis of 30S subunits. This chain is Ribosomal RNA small subunit methyltransferase A, found in Cereibacter sphaeroides (strain ATCC 17029 / ATH 2.4.9) (Rhodobacter sphaeroides).